Reading from the N-terminus, the 647-residue chain is Acetyl-coenzyme A synthetase (647 aa).

Residues arginine 192–arginine 195, threonine 310, and asparagine 334 each bind CoA. ATP-binding positions include glycine 386–proline 388, aspartate 410–threonine 415, aspartate 499, and arginine 514. Residue serine 522 participates in CoA binding. Arginine 525 is an ATP binding site. Mg(2+) is bound by residues valine 536, histidine 538, and valine 541. Arginine 583 serves as a coordination point for CoA. An N6-acetyllysine modification is found at lysine 608.

This sequence belongs to the ATP-dependent AMP-binding enzyme family. The cofactor is Mg(2+). Acetylated. Deacetylation by the SIR2-homolog deacetylase activates the enzyme.

The enzyme catalyses acetate + ATP + CoA = acetyl-CoA + AMP + diphosphate. In terms of biological role, catalyzes the conversion of acetate into acetyl-CoA (AcCoA), an essential intermediate at the junction of anabolic and catabolic pathways. AcsA undergoes a two-step reaction. In the first half reaction, AcsA combines acetate with ATP to form acetyl-adenylate (AcAMP) intermediate. In the second half reaction, it can then transfer the acetyl group from AcAMP to the sulfhydryl group of CoA, forming the product AcCoA. The sequence is that of Acetyl-coenzyme A synthetase from Caulobacter vibrioides (strain ATCC 19089 / CIP 103742 / CB 15) (Caulobacter crescentus).